We begin with the raw amino-acid sequence, 589 residues long: Transmembrane 9 superfamily member 1 (589 aa).

An N-terminal signal peptide occupies residues 1–27 (MTVLGHPRSWSCHCLPVLILLLGIGHG). Asparagine 178 carries an N-linked (GlcNAc...) asparagine glycan. 4 consecutive transmembrane segments (helical) span residues 237-257 (LSII…AVIL), 310-330 (VLGV…MALL), 339-359 (GAIN…SGYV), and 373-393 (VWNI…TWSV). N-linked (GlcNAc...) asparagine glycosylation is present at asparagine 401. The next 3 helical transmembrane spans lie at 412-432 (ILLL…IGGI), 482-502 (GILF…SIAL), and 518-538 (SVLS…FYYA). Asparagine 542 is a glycosylation site (N-linked (GlcNAc...) asparagine). Residues 552-572 (FFGYSLLTGYVFFLMLGTISF) form a helical membrane-spanning segment.

This sequence belongs to the nonaspanin (TM9SF) (TC 9.A.2) family.

The protein resides in the lysosome membrane. It is found in the cytoplasmic vesicle. Its subcellular location is the autophagosome membrane. In terms of biological role, plays an essential role in autophagy. The polypeptide is Transmembrane 9 superfamily member 1 (Tm9sf1) (Rattus norvegicus (Rat)).